Consider the following 446-residue polypeptide: Glycogen synthase (446 aa).

R15 is an ADP-alpha-D-glucose binding site.

Belongs to the glycosyltransferase 1 family. Bacterial/plant glycogen synthase subfamily.

It carries out the reaction [(1-&gt;4)-alpha-D-glucosyl](n) + ADP-alpha-D-glucose = [(1-&gt;4)-alpha-D-glucosyl](n+1) + ADP + H(+). The protein operates within glycan biosynthesis; glycogen biosynthesis. Synthesizes alpha-1,4-glucan chains using ADP-glucose. This Deinococcus deserti (strain DSM 17065 / CIP 109153 / LMG 22923 / VCD115) protein is Glycogen synthase.